The following is a 182-amino-acid chain: FMN reductase (NADH) RutF (182 aa).

The protein belongs to the non-flavoprotein flavin reductase family. RutF subfamily.

The catalysed reaction is FMNH2 + NAD(+) = FMN + NADH + 2 H(+). Functionally, catalyzes the reduction of FMN to FMNH2 which is used to reduce pyrimidine by RutA via the Rut pathway. The protein is FMN reductase (NADH) RutF of Yersinia enterocolitica serotype O:8 / biotype 1B (strain NCTC 13174 / 8081).